We begin with the raw amino-acid sequence, 147 residues long: Hemoglobin subunit gamma (147 aa).

The region spanning His-3–His-147 is the Globin domain. Heme b contacts are provided by His-64 and His-93.

It belongs to the globin family. As to quaternary structure, heterotetramer of two alpha chains and two gamma chains in fetal hemoglobin (Hb F). As to expression, red blood cells.

Its function is as follows. Gamma chains make up the fetal hemoglobin F, in combination with alpha chains. In Loxodonta africana (African elephant), this protein is Hemoglobin subunit gamma (HBG).